Here is a 244-residue protein sequence, read N- to C-terminus: Ribonuclease HII (244 aa).

The RNase H type-2 domain occupies 31 to 222; sequence RLIAGVDEAG…VRLALQGREG (192 aa). Residues aspartate 37, glutamate 38, and aspartate 130 each coordinate a divalent metal cation.

It belongs to the RNase HII family. Requires Mn(2+) as cofactor. It depends on Mg(2+) as a cofactor.

Its subcellular location is the cytoplasm. The enzyme catalyses Endonucleolytic cleavage to 5'-phosphomonoester.. Functionally, endonuclease that specifically degrades the RNA of RNA-DNA hybrids. This Xanthomonas axonopodis pv. citri (strain 306) protein is Ribonuclease HII.